We begin with the raw amino-acid sequence, 199 residues long: Superoxide dismutase [Mn/Fe] (199 aa).

4 residues coordinate Fe(3+): His27, His81, Asp161, and His165. Residues His27, His81, Asp161, and His165 each contribute to the Mn(2+) site.

Belongs to the iron/manganese superoxide dismutase family. Homodimer. Mn(2+) is required as a cofactor. Requires Fe(3+) as cofactor.

The enzyme catalyses 2 superoxide + 2 H(+) = H2O2 + O2. Destroys superoxide anion radicals which are normally produced within the cells and which are toxic to biological systems. Catalyzes the dismutation of superoxide anion radicals into O2 and H2O2 by successive reduction and oxidation of the transition metal ion at the active site. This chain is Superoxide dismutase [Mn/Fe] (sodA), found in Staphylococcus saprophyticus subsp. saprophyticus (strain ATCC 15305 / DSM 20229 / NCIMB 8711 / NCTC 7292 / S-41).